The following is a 196-amino-acid chain: Molybdenum cofactor guanylyltransferase (196 aa).

GTP is bound by residues 10 to 12 (LAG), K23, N51, D69, and D99. D99 is a Mg(2+) binding site.

This sequence belongs to the MobA family. As to quaternary structure, monomer. The cofactor is Mg(2+).

It localises to the cytoplasm. The enzyme catalyses Mo-molybdopterin + GTP + H(+) = Mo-molybdopterin guanine dinucleotide + diphosphate. Transfers a GMP moiety from GTP to Mo-molybdopterin (Mo-MPT) cofactor (Moco or molybdenum cofactor) to form Mo-molybdopterin guanine dinucleotide (Mo-MGD) cofactor. The polypeptide is Molybdenum cofactor guanylyltransferase (Shewanella sp. (strain W3-18-1)).